The following is a 408-amino-acid chain: Putative mannan endo-1,4-beta-mannosidase 4 (408 aa).

Residues Met-1–Ala-23 form the signal peptide. Asn-73 carries an N-linked (GlcNAc...) asparagine glycan. Substrate-binding residues include Trp-85 and Asn-201. Residue Glu-202 is the Proton donor of the active site. The Nucleophile role is filled by Glu-322. Substrate is bound at residue Trp-364.

This sequence belongs to the glycosyl hydrolase 5 (cellulase A) family.

The protein resides in the secreted. It catalyses the reaction Random hydrolysis of (1-&gt;4)-beta-D-mannosidic linkages in mannans, galactomannans and glucomannans.. In Arabidopsis thaliana (Mouse-ear cress), this protein is Putative mannan endo-1,4-beta-mannosidase 4 (MAN4).